Here is a 100-residue protein sequence, read N- to C-terminus: Small ribosomal subunit protein uS14c (100 aa).

Belongs to the universal ribosomal protein uS14 family. Part of the 30S ribosomal subunit.

It localises to the plastid. Its subcellular location is the chloroplast. Binds 16S rRNA, required for the assembly of 30S particles. The chain is Small ribosomal subunit protein uS14c from Lepidium virginicum (Virginia pepperweed).